The following is a 272-amino-acid chain: 3-methyl-2-oxobutanoate hydroxymethyltransferase (272 aa).

Aspartate 51 and aspartate 90 together coordinate Mg(2+). 3-methyl-2-oxobutanoate contacts are provided by residues aspartate 51–serine 52, aspartate 90, and lysine 119. Residue glutamate 121 participates in Mg(2+) binding. Glutamate 188 (proton acceptor) is an active-site residue.

It belongs to the PanB family. Homodecamer; pentamer of dimers. Mg(2+) is required as a cofactor.

Its subcellular location is the cytoplasm. The catalysed reaction is 3-methyl-2-oxobutanoate + (6R)-5,10-methylene-5,6,7,8-tetrahydrofolate + H2O = 2-dehydropantoate + (6S)-5,6,7,8-tetrahydrofolate. It participates in cofactor biosynthesis; (R)-pantothenate biosynthesis; (R)-pantoate from 3-methyl-2-oxobutanoate: step 1/2. Functionally, catalyzes the reversible reaction in which hydroxymethyl group from 5,10-methylenetetrahydrofolate is transferred onto alpha-ketoisovalerate to form ketopantoate. In Dechloromonas aromatica (strain RCB), this protein is 3-methyl-2-oxobutanoate hydroxymethyltransferase.